The sequence spans 297 residues: Phosphoribosylaminoimidazole-succinocarboxamide synthase (297 aa).

The protein belongs to the SAICAR synthetase family.

The enzyme catalyses 5-amino-1-(5-phospho-D-ribosyl)imidazole-4-carboxylate + L-aspartate + ATP = (2S)-2-[5-amino-1-(5-phospho-beta-D-ribosyl)imidazole-4-carboxamido]succinate + ADP + phosphate + 2 H(+). It participates in purine metabolism; IMP biosynthesis via de novo pathway; 5-amino-1-(5-phospho-D-ribosyl)imidazole-4-carboxamide from 5-amino-1-(5-phospho-D-ribosyl)imidazole-4-carboxylate: step 1/2. In Mycobacterium sp. (strain KMS), this protein is Phosphoribosylaminoimidazole-succinocarboxamide synthase.